A 130-amino-acid chain; its full sequence is Small ribosomal subunit protein uS8 (130 aa).

Belongs to the universal ribosomal protein uS8 family. As to quaternary structure, part of the 30S ribosomal subunit. Contacts proteins S5 and S12.

Its function is as follows. One of the primary rRNA binding proteins, it binds directly to 16S rRNA central domain where it helps coordinate assembly of the platform of the 30S subunit. The chain is Small ribosomal subunit protein uS8 from Pectobacterium carotovorum subsp. carotovorum (strain PC1).